Consider the following 369-residue polypeptide: Flagellar P-ring protein (369 aa).

Positions methionine 1–alanine 23 are cleaved as a signal peptide.

The protein belongs to the FlgI family. In terms of assembly, the basal body constitutes a major portion of the flagellar organelle and consists of four rings (L,P,S, and M) mounted on a central rod.

Its subcellular location is the periplasm. It is found in the bacterial flagellum basal body. Its function is as follows. Assembles around the rod to form the L-ring and probably protects the motor/basal body from shearing forces during rotation. The polypeptide is Flagellar P-ring protein (Pectobacterium atrosepticum (strain SCRI 1043 / ATCC BAA-672) (Erwinia carotovora subsp. atroseptica)).